The chain runs to 117 residues: V-type proton ATPase subunit G (117 aa).

Belongs to the V-ATPase G subunit family. V-ATPase is a heteromultimeric enzyme made up of two complexes: the ATP-hydrolytic V1 complex and the proton translocation V0 complex. The V1 complex consists of three catalytic AB heterodimers that form a heterohexamer, three peripheral stalks each consisting of EG heterodimers, one central rotor including subunits D and F, and the regulatory subunits C and H. The proton translocation complex V0 consists of the proton transport subunit a, a ring of proteolipid subunits c9c'', rotary subunit d, subunits e and f, and the accessory subunits VhaAC45 and ATP6AP2.

Its function is as follows. Subunit of the V1 complex of vacuolar(H+)-ATPase (V-ATPase), a multisubunit enzyme composed of a peripheral complex (V1) that hydrolyzes ATP and a membrane integral complex (V0) that translocates protons. V-ATPase is responsible for acidifying and maintaining the pH of intracellular compartments and in some cell types, is targeted to the plasma membrane, where it is responsible for acidifying the extracellular environment. In enterocytes, acts as part of a pHCl-2 sensory pathway which mediates Tor-dependent larval growth and metabolism in response to zinc availability. Likely acts in maintaining enterocyte lysosomal acidification which consequently promotes Tor activation at the lysosome membrane. This is V-type proton ATPase subunit G (Vha13) from Drosophila melanogaster (Fruit fly).